We begin with the raw amino-acid sequence, 291 residues long: 4-hydroxy-tetrahydrodipicolinate synthase (291 aa).

Threonine 44 contacts pyruvate. Tyrosine 132 (proton donor/acceptor) is an active-site residue. Lysine 160 functions as the Schiff-base intermediate with substrate in the catalytic mechanism. Isoleucine 202 contacts pyruvate.

Belongs to the DapA family. In terms of assembly, homotetramer; dimer of dimers.

The protein resides in the cytoplasm. It catalyses the reaction L-aspartate 4-semialdehyde + pyruvate = (2S,4S)-4-hydroxy-2,3,4,5-tetrahydrodipicolinate + H2O + H(+). It participates in amino-acid biosynthesis; L-lysine biosynthesis via DAP pathway; (S)-tetrahydrodipicolinate from L-aspartate: step 3/4. Catalyzes the condensation of (S)-aspartate-beta-semialdehyde [(S)-ASA] and pyruvate to 4-hydroxy-tetrahydrodipicolinate (HTPA). This Sphingopyxis alaskensis (strain DSM 13593 / LMG 18877 / RB2256) (Sphingomonas alaskensis) protein is 4-hydroxy-tetrahydrodipicolinate synthase.